We begin with the raw amino-acid sequence, 266 residues long: Putative carbamate hydrolase RutD (266 aa).

Positions 14–238 (PVVVLSAGLG…RVEMPWGGHA (225 aa)) constitute an AB hydrolase-1 domain.

This sequence belongs to the AB hydrolase superfamily. Hydrolase RutD family.

It catalyses the reaction carbamate + 2 H(+) = NH4(+) + CO2. Functionally, involved in pyrimidine catabolism. May facilitate the hydrolysis of carbamate, a reaction that can also occur spontaneously. This is Putative carbamate hydrolase RutD from Klebsiella pneumoniae (strain 342).